A 23-amino-acid chain; its full sequence is Paralytic peptide 1 (23 aa).

Cysteines 7 and 19 form a disulfide.

The protein belongs to the GBP/PSP1/paralytic peptide family. In terms of tissue distribution, hemolymph.

Functionally, causes rapid, rigid paralysis when injected into Lepidopteran larvae. The physiological role may be to reduce hemolymph loss following injury and promote wound healing. The chain is Paralytic peptide 1 from Heliothis virescens (Tobacco budworm moth).